The sequence spans 129 residues: Ribosome-binding factor A (129 aa).

This sequence belongs to the RbfA family. Monomer. Binds 30S ribosomal subunits, but not 50S ribosomal subunits or 70S ribosomes.

The protein localises to the cytoplasm. In terms of biological role, one of several proteins that assist in the late maturation steps of the functional core of the 30S ribosomal subunit. Associates with free 30S ribosomal subunits (but not with 30S subunits that are part of 70S ribosomes or polysomes). Required for efficient processing of 16S rRNA. May interact with the 5'-terminal helix region of 16S rRNA. This Thermomicrobium roseum (strain ATCC 27502 / DSM 5159 / P-2) protein is Ribosome-binding factor A.